Here is a 789-residue protein sequence, read N- to C-terminus: SH3 domain-containing protein 19 (789 aa).

3 disordered regions span residues 24–170 (TNTE…PPRL), 209–404 (DDDV…RPKP), and 472–497 (TPLDERPRGRPNDSGHSQKPVDSGAP). Serine 65 is modified (phosphoserine). Residues 296 to 305 (SHSDRTRNPE) are compositionally biased toward basic and acidic residues. Pro residues predominate over residues 335 to 351 (WRPPPKGAPERPPPPKL). The segment covering 352–361 (PASKSSNKNL) has biased composition (low complexity). Position 368 is a phosphoserine (serine 368). SH3 domains follow at residues 414–476 (LSVP…PLDE), 494–553 (SGAP…VIVD), 570–629 (AKGP…LVGD), 660–719 (PPGE…PCPA), and 729–788 (PKGR…FLQV). The segment covering 474–484 (LDERPRGRPND) has biased composition (basic and acidic residues). The tract at residues 635–663 (ANILSTKVPPKTKNEDPGSNSQDSSPPGE) is disordered.

As to quaternary structure, interacts with ADAM12. Isoform 2 (but not isoform 1) interacts with ADAM9, ADAM10, ADAM15 and ADAM17. Interacts with SH3GL1 SH3 domain. Interacts via SH3 3 and SH3 4 or SH3 4 and SH3 5 domains with SOS2. Probably forms a trimeric complex with SH3GL1 and SOS2. Interacts with SH3YL1. Expressed in hair follicles.

It is found in the cytoplasm. May play a role in regulating A disintegrin and metalloproteases (ADAMs) in the signaling of EGFR-ligand shedding. May be involved in suppression of Ras-induced cellular transformation and Ras-mediated activation of ELK1. Plays a role in the regulation of cell morphology and cytoskeletal organization. The polypeptide is SH3 domain-containing protein 19 (Sh3d19) (Mus musculus (Mouse)).